The sequence spans 320 residues: Probable arabinan endo-1,5-alpha-L-arabinosidase C (320 aa).

The first 16 residues, 1 to 16 (MYRSTLLFLFIALVNA), serve as a signal peptide directing secretion. Asp31 serves as the catalytic Proton acceptor. Asn73, Asn137, and Asn191 each carry an N-linked (GlcNAc...) asparagine glycan. Residue Glu199 is the Proton donor of the active site.

It belongs to the glycosyl hydrolase 43 family.

It localises to the secreted. The catalysed reaction is Endohydrolysis of (1-&gt;5)-alpha-arabinofuranosidic linkages in (1-&gt;5)-arabinans.. Its pathway is glycan metabolism; L-arabinan degradation. Endo-1,5-alpha-L-arabinanase involved in degradation of pectin. Its preferred substrate is linear 1,5-alpha-L-arabinan. In Aspergillus terreus (strain NIH 2624 / FGSC A1156), this protein is Probable arabinan endo-1,5-alpha-L-arabinosidase C (abnC).